A 1490-amino-acid chain; its full sequence is Leucine-rich repeat-containing protein 7 (1490 aa).

17 LRR repeats span residues 23–44 (IISVLDYSHCSLQQVPKEVFNF), 47–68 (TLEELYLDANQIEELPKQLFNC), 70–91 (ALRKLSIPDNDLSSLPTSIASL), 93–114 (NLKELDISKNGVQEFPENIKCC), 116–137 (CLTIIEASVNPISKLPDGFTQL), 139–161 (NLTQLYLNDAFLEFLPANFGRLV), 162–183 (KLRILELRENHLKTLPKSMHKL), 185–206 (QLERLDLGNNEFSELPEVLDQI), 208–229 (NLRELWMDNNALQVLPGSIGKL), 231–253 (MLVYLDMSKNRIETVDMDISGCE), 254–275 (ALEDLLLSSNMLQQLPDSIGLL), 277–298 (KLTTLKVDDNQLTMLPNTIGNL), 300–321 (LLEEFDCSCNELESLPPTIGYL), 323–344 (SLRTLAVDENFLPELPREIGSC), 346–367 (NVTVMSLRSNKLEFLPEEIGQM), 369–391 (RLRVLNLSDNRLKNLPFSFTKLK), and 392–413 (ELAALWLSDNQSKALIPLQTEA). 3 positions are modified to phosphoserine: serine 439, serine 441, and serine 443. Residues 663–676 (KKESTDESEVDKTH) show a composition bias toward basic and acidic residues. Disordered regions lie at residues 663–704 (KKES…NTRM), 785–807 (AGENANNNPLLSSKARSVPAHGR), and 822–899 (ELEQ…YHDP). Positions 677–686 (CLNNSVSSGT) are enriched in polar residues. Residues 687 to 700 (YSDYSPSQASSASS) are compositionally biased toward low complexity. Threonine 831 is subject to Phosphothreonine. Position 850 is a phosphoserine (serine 850). A compositionally biased stretch (low complexity) spans 859–871 (PSKLETTPTTSPL). Threonine 865 carries the phosphothreonine modification. At serine 869 the chain carries Phosphoserine. Residues 872 to 882 (PERKDHMKEPT) are compositionally biased toward basic and acidic residues. Serine 947, serine 949, and serine 1118 each carry phosphoserine. Positions 1134–1144 (PHELPPGDRYG) are enriched in basic and acidic residues. 2 disordered regions span residues 1134-1158 (PHELPPGDRYGRATYRGGLEGQSSI) and 1196-1218 (QRRPLSARSYSTESYGASQTRPV). Residue arginine 1149 is modified to Omega-N-methylarginine. Residues 1196–1217 (QRRPLSARSYSTESYGASQTRP) show a composition bias toward polar residues. Serine 1233 is subject to Phosphoserine. Disordered stretches follow at residues 1238–1265 (GNYGDKTSDNSDIKTRPTPVKGEESCGK) and 1282–1312 (RLDRTPSQQSNILDNGQEDVSPSGQWNPYPL). Residues 1243–1263 (KTSDNSDIKTRPTPVKGEESC) are compositionally biased toward basic and acidic residues. The span at 1286–1307 (TPSQQSNILDNGQEDVSPSGQW) shows a compositional bias: polar residues. 2 positions are modified to phosphoserine: serine 1288 and serine 1392. Residues 1398 to 1488 (EQFCVRIEKN…TVDLVIQREL (91 aa)) form the PDZ domain.

Belongs to the LAP (LRR and PDZ) protein family. In terms of assembly, interacts with CNKSR2 and DLG4. Interacts with CTNND2/Catenin delta-2. Forms a complex with N-cadherin through CTNND2. Interacts with CAMK2A. In terms of tissue distribution, expressed in brain (at protein level).

The protein resides in the cytoplasm. Its subcellular location is the postsynaptic density. Its function is as follows. Required for normal synaptic spine architecture and function. Necessary for DISC1 and GRM5 localization to postsynaptic density complexes and for both N-methyl D-aspartate receptor-dependent and metabotropic glutamate receptor-dependent long term depression. The polypeptide is Leucine-rich repeat-containing protein 7 (Lrrc7) (Mus musculus (Mouse)).